Consider the following 396-residue polypeptide: MSKEKVILAYSGGLDTSVAITWLKKDYDVVAVCMDVGEGKDLEFIHDKALKVGAIESYVLDIKDEFAEEYVLPALQAHAYYEQKYPLVSALSRPVISKKLVEIAHQTGATTIAHGCTGKGNDQVRFEVAIAALDPKLKVIAPVREWKWSREEEINYAKENGVPVPADLDNPYSVDQNLWGRANECGVLENPWNQAPEEAFGITNSVEEAPDKAEYVDITFKEGKPVALDGQEMKLADLIQKLNVLAGKHGVGRIDHVENRLVGIKSREIYECPGAVTLLTAHKEIEDITLVREVSHFKPILENELSNLIYNALWFNPATQAILAYITETQKEVNGTAKVKLYKGSARVVARKSPHSLYDENLATYTSADSFDQDAAVGFIKLWGLPTQVNSQVNNK.

ATP is bound at residue 9 to 17; that stretch reads AYSGGLDTS. Y85 contributes to the L-citrulline binding site. G115 is an ATP binding site. Residues T117, N121, and D122 each coordinate L-aspartate. N121 is a binding site for L-citrulline. Residues R125, S173, E258, and Y270 each coordinate L-citrulline.

It belongs to the argininosuccinate synthase family. Type 1 subfamily. In terms of assembly, homotetramer.

The protein resides in the cytoplasm. The enzyme catalyses L-citrulline + L-aspartate + ATP = 2-(N(omega)-L-arginino)succinate + AMP + diphosphate + H(+). It participates in amino-acid biosynthesis; L-arginine biosynthesis; L-arginine from L-ornithine and carbamoyl phosphate: step 2/3. The polypeptide is Argininosuccinate synthase (Streptococcus mutans serotype c (strain ATCC 700610 / UA159)).